Here is a 94-residue protein sequence, read N- to C-terminus: MTKSELIERLASQQSHIPAKAVEDAVKEMLEHMASTLAQGERIEIRGFGSFSLHYRAPRTGRNPKTGDKVELEGKYVPHFKPGKELRDRANIYG.

It belongs to the bacterial histone-like protein family. As to quaternary structure, heterodimer of an alpha and a beta chain.

This protein is one of the two subunits of integration host factor, a specific DNA-binding protein that functions in genetic recombination as well as in transcriptional and translational control. The polypeptide is Integration host factor subunit beta (Salmonella arizonae (strain ATCC BAA-731 / CDC346-86 / RSK2980)).